We begin with the raw amino-acid sequence, 64 residues long: Sperm protamine P1 (64 aa).

A disordered region spans residues 1-64; that stretch reads MVRYRRHSRS…QSRRRRRRRY (64 aa).

This sequence belongs to the protamine P1 family. Testis.

The protein localises to the nucleus. The protein resides in the chromosome. In terms of biological role, protamines substitute for histones in the chromatin of sperm during the haploid phase of spermatogenesis. They compact sperm DNA into a highly condensed, stable and inactive complex. The protein is Sperm protamine P1 (PRM1) of Dromiciops gliroides (Monito del Monte).